A 684-amino-acid chain; its full sequence is Methionine--tRNA ligase (684 aa).

Positions 12–22 (PYANGSIHLGH) match the 'HIGH' region motif. Residues C143, C146, C156, and C159 each coordinate Zn(2+). Positions 339–343 (KMSKS) match the 'KMSKS' region motif. An ATP-binding site is contributed by K342. Residues 581–684 (DFMKIDMRVA…AGAQPGDKVG (104 aa)) form the tRNA-binding domain.

Belongs to the class-I aminoacyl-tRNA synthetase family. MetG type 1 subfamily. In terms of assembly, homodimer. Requires Zn(2+) as cofactor.

The protein localises to the cytoplasm. The catalysed reaction is tRNA(Met) + L-methionine + ATP = L-methionyl-tRNA(Met) + AMP + diphosphate. Its function is as follows. Is required not only for elongation of protein synthesis but also for the initiation of all mRNA translation through initiator tRNA(fMet) aminoacylation. This chain is Methionine--tRNA ligase, found in Neisseria gonorrhoeae (strain ATCC 700825 / FA 1090).